Consider the following 488-residue polypeptide: MSLNHKTIDELHTLLLSKEISAKELTQATLDDIKAREDAVGSFITLAEEKALSQAEAIDARGIDPNNVMSGIPFAVKDNISTEGILTTAASKMLYNYEPIFNATAIEKAYAKDMIVIGKTNMDEFAMGGSTETSYFKKTKNAWDHSKVPGGSSGGSATAVASGQVRLSLGSDTGGSIRQPAAFNGIVGMKPTYGTVSRFGLIAFGSSLDQIGPFSQTVKENAQLLNVIAGSDDKDSTSAPVQIADYTSAIGKDIKGMKIALPKEYLGEGIDPKIKENILEAAKQFEKLGATVEEVSLPHSKYGVAVYYIIASSEASSNLQRFDGIRYGYRAQDAKTLEEIYVNTRSQGFGEEVKRRIMLGTFSLSSGYYDAYFKKAGQVRTLIIQDFEKVFADYDLIIGPTAPTVAFGLDTLNHDPVSMYLADLLTIPVNLAGLPGISIPSGFVDGLPVGLQLIGPKYSEERIYQAAAAFEATTDYHKQQPVIFGGEK.

Residues lysine 77 and serine 152 each act as charge relay system in the active site. Serine 176 acts as the Acyl-ester intermediate in catalysis.

It belongs to the amidase family. GatA subfamily. In terms of assembly, heterotrimer of A, B and C subunits.

It catalyses the reaction L-glutamyl-tRNA(Gln) + L-glutamine + ATP + H2O = L-glutaminyl-tRNA(Gln) + L-glutamate + ADP + phosphate + H(+). Its function is as follows. Allows the formation of correctly charged Gln-tRNA(Gln) through the transamidation of misacylated Glu-tRNA(Gln) in organisms which lack glutaminyl-tRNA synthetase. The reaction takes place in the presence of glutamine and ATP through an activated gamma-phospho-Glu-tRNA(Gln). The chain is Glutamyl-tRNA(Gln) amidotransferase subunit A from Streptococcus uberis (strain ATCC BAA-854 / 0140J).